The chain runs to 288 residues: Diaminopimelate epimerase (288 aa).

Substrate-binding residues include asparagine 17, glutamine 47, and asparagine 67. Cysteine 76 (proton donor) is an active-site residue. Substrate contacts are provided by residues glycine 77–asparagine 78, asparagine 163, asparagine 196, and glutamate 214–arginine 215. The active-site Proton acceptor is cysteine 223. Glycine 224–serine 225 lines the substrate pocket.

It belongs to the diaminopimelate epimerase family. As to quaternary structure, homodimer.

It is found in the cytoplasm. The enzyme catalyses (2S,6S)-2,6-diaminopimelate = meso-2,6-diaminopimelate. Its pathway is amino-acid biosynthesis; L-lysine biosynthesis via DAP pathway; DL-2,6-diaminopimelate from LL-2,6-diaminopimelate: step 1/1. Its function is as follows. Catalyzes the stereoinversion of LL-2,6-diaminopimelate (L,L-DAP) to meso-diaminopimelate (meso-DAP), a precursor of L-lysine and an essential component of the bacterial peptidoglycan. In Rhodopseudomonas palustris (strain BisB18), this protein is Diaminopimelate epimerase.